A 435-amino-acid chain; its full sequence is GTPase Obg (435 aa).

The Obg domain occupies 1-159; sequence MAFIDKCKIV…VEVLLELKTI (159 aa). The 170-residue stretch at 160–329 folds into the OBG-type G domain; it reads ADIGIIGLPN…MLDDVIKIYF (170 aa). Residues 166–173, 191–195, 212–215, 282–285, and 310–312 contribute to the GTP site; these read GLPNAGKS, FTTLN, DIPG, NKID, and SAL. 2 residues coordinate Mg(2+): Ser-173 and Thr-193. In terms of domain architecture, OCT spans 357 to 435; sequence KSKELDKTIE…IYDITLEFEE (79 aa).

The protein belongs to the TRAFAC class OBG-HflX-like GTPase superfamily. OBG GTPase family. In terms of assembly, monomer. Mg(2+) serves as cofactor.

It is found in the cytoplasm. In terms of biological role, an essential GTPase which binds GTP, GDP and possibly (p)ppGpp with moderate affinity, with high nucleotide exchange rates and a fairly low GTP hydrolysis rate. Plays a role in control of the cell cycle, stress response, ribosome biogenesis and in those bacteria that undergo differentiation, in morphogenesis control. In Ureaplasma parvum serovar 3 (strain ATCC 27815 / 27 / NCTC 11736), this protein is GTPase Obg.